The sequence spans 390 residues: S-adenosylmethionine synthase 4 (390 aa).

Glutamate 9 is a Mg(2+) binding site. An ATP-binding site is contributed by histidine 15. Glutamate 43 is a K(+) binding site. The L-methionine site is built by glutamate 56 and glutamine 99. Residues 167 to 169, 235 to 238, aspartate 246, 252 to 253, alanine 269, lysine 273, and lysine 277 each bind ATP; these read DGK, SGRF, and RK. Aspartate 246 provides a ligand contact to L-methionine. Lysine 277 serves as a coordination point for L-methionine.

It belongs to the AdoMet synthase family. In terms of assembly, homotetramer. Mn(2+) is required as a cofactor. Requires Mg(2+) as cofactor. It depends on Co(2+) as a cofactor. The cofactor is K(+). In terms of tissue distribution, mostly expressed in flowers, seedpods and roots, and, to a lower extent, in stems and leaves.

The protein resides in the cytoplasm. The enzyme catalyses L-methionine + ATP + H2O = S-adenosyl-L-methionine + phosphate + diphosphate. It participates in amino-acid biosynthesis; S-adenosyl-L-methionine biosynthesis; S-adenosyl-L-methionine from L-methionine: step 1/1. Catalyzes the formation of S-adenosylmethionine from methionine and ATP. The reaction comprises two steps that are both catalyzed by the same enzyme: formation of S-adenosylmethionine (AdoMet) and triphosphate, and subsequent hydrolysis of the triphosphate. This is S-adenosylmethionine synthase 4 (MSAMS4) from Brassica juncea (Indian mustard).